The sequence spans 1045 residues: MATPAGLERWVQDELHSVLGLSERHVAQFLIGTAQRCASAEEFVQRLRDTDTLDLSGPARDFALKLWNKVPRKAVAEKPARAAEREARALLEKNRSYRLLEDSEESSEEAVGRAGSSLQKKRKKRKHLRKKRQEEEEEEEEEEVPEKGKKTTGGNKPQTEKPESEDEWERTERERLQDLEERDAFAERVRQRDKDRTRNVLERSDKKAYEEAQKRLKMAEEDRKAMVPELRKKSRREYLAKREREKLEDLEAELADEEFLFGDVELSRHERRELKYKRRVRDLAREYRAAGEQEKLEATNRYHMPEETRGQPTRAVDLVEEESGAPGEEQRRWEEARLGAASLKFGARDAASQEPKYQLVLEEEETIEFVRATQLQGDEEPAAPPAPTQAQQKESIQAVRRSLPVFPFREELLAAVANHQILIIEGETGSGKTTQIPQYLFEEGYTQKGMKIACTQPRRVAAMSVAARVAREMGVKLGNEVGYSIRFEDCTSERTVLRYMTDGMLLREFLSEPDLASYSVVMVDEAHERTLHTDILFGLIKDVARFRPELKVLVASATLDTARFSTFFDDAPVFRIPGRRFPVDIFYTKAPEADYLEACVVSVLQIHVTQPPGDILVFLTGQEEIEAACEMLQDRCRRLGSKIRELLVLPIYANLPSDMQARIFQPTPPGARKVVVATNIAETSLTIEGIIYVLDPGFCKQKSYNPRTGMESLTVTPCSKASANQRAGRAGRVAAGKCFRLYTAWAYQHELEETTVPEIQRTSLGNVVLLLKSLGIHDLMHFDFLDPPPYETLLLALEQLYALGALNHLGELTTSGRKMAELPVDPMLSKMILASEKYSCSEEILTVAAMLSVNNSIFYRPKDKVVHADNARVNFFLPGGDHLVLLNVYTQWAESGYSSQWCYENFVQFRSMRRARDVREQLEGLLERVEVGLSSCQGDYIRVRKAITAGYFYHTARLTRSGYRTVKQQQTVFIHPNSSLFEEQPRWLLYHELVLTTKEFMRQVLEIESSWLLEVAPHYYKAKELEDPHAKKMPKKTGKTREELG.

The disordered stretch occupies residues 101–211 (EDSEESSEEA…ERSDKKAYEE (111 aa)). Residues S103, S106, and S107 each carry the phosphoserine modification. Residues 119-131 (QKKRKKRKHLRKK) show a composition bias toward basic residues. The segment covering 135 to 144 (EEEEEEEEEV) has biased composition (acidic residues). Phosphoserine is present on S164. Residues 170 to 211 (RTERERLQDLEERDAFAERVRQRDKDRTRNVLERSDKKAYEE) show a composition bias toward basic and acidic residues. Residues 413 to 577 (LAAVANHQIL…FDDAPVFRIP (165 aa)) form the Helicase ATP-binding domain. Position 426–433 (426–433 (GETGSGKT)) interacts with ATP. The DEAH box motif lies at 524 to 527 (DEAH). A Helicase C-terminal domain is found at 602–775 (SVLQIHVTQP…NVVLLLKSLG (174 aa)). T716 bears the Phosphothreonine mark. Residues 1026–1045 (EDPHAKKMPKKTGKTREELG) form a disordered region.

This sequence belongs to the DEAD box helicase family. DEAH subfamily. DDX16/PRP8 sub-subfamily. Component of pre-catalytic spliceosome complexes. Component of the minor spliceosome, which splices U12-type introns. Interacts with GPKOW. Interacts with TRIM6. Interacts with RIGI.

The protein localises to the nucleus. The protein resides in the nucleoplasm. It is found in the cytoplasm. It carries out the reaction ATP + H2O = ADP + phosphate + H(+). Functionally, required for pre-mRNA splicing as a component of the spliceosome. Contributes to pre-mRNA splicing after spliceosome formation and prior to the first transesterification reaction. As a component of the minor spliceosome, involved in the splicing of U12-type introns in pre-mRNAs. Also plays a role in innate antiviral response by acting as a pattern recognition receptor sensing splicing signals in viral RNA. Mechanistically, TRIM6 promotes the interaction between unanchored 'Lys-48'-polyubiquitin chains and DHX16, leading to DHX16 interaction with RIGI and ssRNA to amplify RIGI-dependent innate antiviral immune responses. The polypeptide is Pre-mRNA-splicing factor ATP-dependent RNA helicase DHX16 (DHX16) (Sus scrofa (Pig)).